Reading from the N-terminus, the 240-residue chain is Aliphatic sulfonates import ATP-binding protein SsuB (240 aa).

The ABC transporter domain maps to 6–227 (IQLSKLRKNF…VKDRHFACFE (222 aa)). 38–45 (GESGCGKS) contributes to the ATP binding site.

It belongs to the ABC transporter superfamily. Aliphatic sulfonates importer (TC 3.A.1.17.2) family. As to quaternary structure, the complex is composed of two ATP-binding proteins (SsuB), two transmembrane proteins (SsuC) and a solute-binding protein (SsuA).

The protein localises to the cell inner membrane. The catalysed reaction is ATP + H2O + aliphatic sulfonate-[sulfonate-binding protein]Side 1 = ADP + phosphate + aliphatic sulfonateSide 2 + [sulfonate-binding protein]Side 1.. Part of the ABC transporter complex SsuABC involved in aliphatic sulfonates import. Responsible for energy coupling to the transport system. This chain is Aliphatic sulfonates import ATP-binding protein SsuB, found in Zymomonas mobilis subsp. mobilis (strain ATCC 31821 / ZM4 / CP4).